We begin with the raw amino-acid sequence, 236 residues long: Phosphoribosylaminoimidazole-succinocarboxamide synthase (236 aa).

This sequence belongs to the SAICAR synthetase family.

It catalyses the reaction 5-amino-1-(5-phospho-D-ribosyl)imidazole-4-carboxylate + L-aspartate + ATP = (2S)-2-[5-amino-1-(5-phospho-beta-D-ribosyl)imidazole-4-carboxamido]succinate + ADP + phosphate + 2 H(+). It participates in purine metabolism; IMP biosynthesis via de novo pathway; 5-amino-1-(5-phospho-D-ribosyl)imidazole-4-carboxamide from 5-amino-1-(5-phospho-D-ribosyl)imidazole-4-carboxylate: step 1/2. The sequence is that of Phosphoribosylaminoimidazole-succinocarboxamide synthase (purC) from Lactococcus lactis subsp. cremoris (Streptococcus cremoris).